The primary structure comprises 372 residues: 4-hydroxy-3-methylbut-2-en-1-yl diphosphate synthase (flavodoxin) (372 aa).

[4Fe-4S] cluster contacts are provided by cysteine 270, cysteine 273, cysteine 305, and glutamate 312.

This sequence belongs to the IspG family. Requires [4Fe-4S] cluster as cofactor.

The catalysed reaction is (2E)-4-hydroxy-3-methylbut-2-enyl diphosphate + oxidized [flavodoxin] + H2O + 2 H(+) = 2-C-methyl-D-erythritol 2,4-cyclic diphosphate + reduced [flavodoxin]. The protein operates within isoprenoid biosynthesis; isopentenyl diphosphate biosynthesis via DXP pathway; isopentenyl diphosphate from 1-deoxy-D-xylulose 5-phosphate: step 5/6. Functionally, converts 2C-methyl-D-erythritol 2,4-cyclodiphosphate (ME-2,4cPP) into 1-hydroxy-2-methyl-2-(E)-butenyl 4-diphosphate. The polypeptide is 4-hydroxy-3-methylbut-2-en-1-yl diphosphate synthase (flavodoxin) (Pseudoalteromonas translucida (strain TAC 125)).